Consider the following 428-residue polypeptide: Adenylosuccinate synthetase (428 aa).

GTP-binding positions include 12 to 18 and 40 to 42; these read GDEGKGK and GHT. Residue aspartate 13 is the Proton acceptor of the active site. Positions 13 and 40 each coordinate Mg(2+). IMP contacts are provided by residues 13–16, 38–41, threonine 130, arginine 144, glutamine 224, threonine 239, and arginine 303; these read DEGK and NAGH. Histidine 41 (proton donor) is an active-site residue. Residue 299–305 participates in substrate binding; the sequence is VTTGRSR. GTP-binding positions include arginine 305, 331 to 333, and 413 to 415; these read KID and GVG.

It belongs to the adenylosuccinate synthetase family. In terms of assembly, homodimer. Requires Mg(2+) as cofactor.

The protein localises to the cytoplasm. It catalyses the reaction IMP + L-aspartate + GTP = N(6)-(1,2-dicarboxyethyl)-AMP + GDP + phosphate + 2 H(+). It functions in the pathway purine metabolism; AMP biosynthesis via de novo pathway; AMP from IMP: step 1/2. Functionally, plays an important role in the de novo pathway of purine nucleotide biosynthesis. Catalyzes the first committed step in the biosynthesis of AMP from IMP. The chain is Adenylosuccinate synthetase from Clostridium perfringens (strain 13 / Type A).